A 364-amino-acid polypeptide reads, in one-letter code: MRVLVSGGGTGGHIYPALALIREIKKLNPEARFLYIGTENGLESTIVPKAGIPFQSIVISGFKRKISLDNVKTVMRFLKGVQDSKRYIRRFNPDIVIGTGGYVCGPVVYAAAKLGIPTIVHEQNSVPGVTNKFLSRYVDKVAVCFEAAAEHFPQSKVVMTGNPRASEVMDQNGMKGKRSVGLSLPKKSVLIFGGSRGARPINDAFVEAIEQFGNKSYEILYVTGEVHYDKVMDAVKQKGNPNNVIIKPFIHNMPEVLTGVDLVVSRAGATTLAELTALGKPSVLIPSPYVTNNHQEKNARSVVDKGAAKMLLEKDLTAETLIRDIDEILLDAQTLQNMKLAAGQLGIPDAANKLYEVMNKLVKK.

UDP-N-acetyl-alpha-D-glucosamine is bound by residues 10-12 (TGG), Asn124, Ser195, Ile250, and Gln295.

This sequence belongs to the glycosyltransferase 28 family. MurG subfamily.

The protein resides in the cell membrane. It catalyses the reaction di-trans,octa-cis-undecaprenyl diphospho-N-acetyl-alpha-D-muramoyl-L-alanyl-D-glutamyl-meso-2,6-diaminopimeloyl-D-alanyl-D-alanine + UDP-N-acetyl-alpha-D-glucosamine = di-trans,octa-cis-undecaprenyl diphospho-[N-acetyl-alpha-D-glucosaminyl-(1-&gt;4)]-N-acetyl-alpha-D-muramoyl-L-alanyl-D-glutamyl-meso-2,6-diaminopimeloyl-D-alanyl-D-alanine + UDP + H(+). It functions in the pathway cell wall biogenesis; peptidoglycan biosynthesis. Functionally, cell wall formation. Catalyzes the transfer of a GlcNAc subunit on undecaprenyl-pyrophosphoryl-MurNAc-pentapeptide (lipid intermediate I) to form undecaprenyl-pyrophosphoryl-MurNAc-(pentapeptide)GlcNAc (lipid intermediate II). This Bacillus cereus (strain ATCC 10987 / NRS 248) protein is UDP-N-acetylglucosamine--N-acetylmuramyl-(pentapeptide) pyrophosphoryl-undecaprenol N-acetylglucosamine transferase 1.